Consider the following 148-residue polypeptide: Iron/alpha-ketoglutarate-dependent dioxygenase ausU (148 aa).

2 residues coordinate Fe cation: H45 and D47.

The protein belongs to the PhyH family. As to quaternary structure, homodimer. The cofactor is Fe cation.

It participates in secondary metabolite biosynthesis; terpenoid biosynthesis. Iron/alpha-ketoglutarate-dependent dioxygenase; part of the gene cluster B that mediates the biosynthesis of austinol and dehydroaustinol, two fungal meroterpenoids. The first step of the pathway is the synthesis of 3,5-dimethylorsellinic acid by the polyketide synthase ausA. 3,5-dimethylorsellinic acid is then prenylated by the polyprenyl transferase ausN. Further epoxidation by the FAD-dependent monooxygenase ausM and cyclization by the probable terpene cyclase ausL lead to the formation of protoaustinoid A. Protoaustinoid A is then oxidized to spiro-lactone preaustinoid A3 by the combined action of the FAD-binding monooxygenases ausB and ausC, and the dioxygenase ausE. Acid-catalyzed keto-rearrangement and ring contraction of the tetraketide portion of preaustinoid A3 by ausJ lead to the formation of preaustinoid A4. The aldo-keto reductase ausK, with the help of ausH, is involved in the next step by transforming preaustinoid A4 into isoaustinone which is in turn hydroxylated by the P450 monooxygenase ausI to form austinolide. Finally, the cytochrome P450 monooxygenase ausG modifies austinolide to austinol. Austinol can be further modified to dehydroaustinol which forms a diffusible complex with diorcinol that initiates conidiation. Due to genetic rearrangements of the clusters and the subsequent loss of some enzymes, the end products of the Emericella nidulans austinoid biosynthesis clusters are austinol and dehydroaustinol, even if additional enzymes, such as the O-acetyltransferase ausQ and the cytochrome P450 monooxygenase ausR are still functional. The sequence is that of Iron/alpha-ketoglutarate-dependent dioxygenase ausU from Emericella nidulans (strain FGSC A4 / ATCC 38163 / CBS 112.46 / NRRL 194 / M139) (Aspergillus nidulans).